The primary structure comprises 714 residues: DNA ligase (714 aa).

Residues 47–51 (DAAYD), 96–97 (SL), and E130 each bind NAD(+). Residue K132 is the N6-AMP-lysine intermediate of the active site. NAD(+)-binding residues include R153, E190, K306, and K330. Residues C435, C438, C453, and C459 each contribute to the Zn(2+) site. The BRCT domain occupies 636 to 714 (RNDSAVAGKT…EDEWLKLIEG (79 aa)).

Belongs to the NAD-dependent DNA ligase family. LigA subfamily. Mg(2+) is required as a cofactor. Requires Mn(2+) as cofactor.

It catalyses the reaction NAD(+) + (deoxyribonucleotide)n-3'-hydroxyl + 5'-phospho-(deoxyribonucleotide)m = (deoxyribonucleotide)n+m + AMP + beta-nicotinamide D-nucleotide.. Its function is as follows. DNA ligase that catalyzes the formation of phosphodiester linkages between 5'-phosphoryl and 3'-hydroxyl groups in double-stranded DNA using NAD as a coenzyme and as the energy source for the reaction. It is essential for DNA replication and repair of damaged DNA. The sequence is that of DNA ligase from Nitrobacter hamburgensis (strain DSM 10229 / NCIMB 13809 / X14).